The sequence spans 34 residues: Leader peptide SpeFL (34 aa).

Residues 1–13 form a sensor domain region; it reads MENNSRTMPHIRR. Residues 10–16 carry the Ornithine recognition loop motif; sequence HIRRTTH. Arg13 lines the L-ornithine pocket. The interval 14–34 is effector domain; sequence TTHIMKFAHRNSFDFHFFNAR.

The protein belongs to the speF operon leader peptide family. Binds ornithine in stalled 70S ribosomes, blocking the upper two-thirds of the exit tunnel. Contacts 23S rRNA and ribosomal proteins L4 and L22.

In terms of biological role, a small protein (arrest peptide) encoded upstream of inducible ornithine carboxylase gene (speF) that controls expression of downstream genes (speF and patE) by nascent chain-translational arrest and transcriptional attenuation. In the presence of ornithine a toeprint due to ribosomal arrest can be seen on the speFL transcript. Only L-ornithine (not other tested amino acids) has this effect. It is thought that in the presence of ornithine, ribosomal stalling on speFL prevents binding of Rho transcription termination factor to a downstream rut site allowing transcription of the operon. In the absence of ornithine, ribosomes terminate translation and are recycled, exposing the rut site allowing Rho to bind and prematurely terminate transcription. The presence of a pair of rare Arg codons could slow down translation to prevent polysome accumulation and to expose the rut site to Rho. This chain is Leader peptide SpeFL, found in Escherichia coli (strain K12).